A 209-amino-acid chain; its full sequence is GTP cyclohydrolase 1 (209 aa).

The Zn(2+) site is built by C89, H92, and C163.

The protein belongs to the GTP cyclohydrolase I family. As to quaternary structure, toroid-shaped homodecamer, composed of two pentamers of five dimers.

It carries out the reaction GTP + H2O = 7,8-dihydroneopterin 3'-triphosphate + formate + H(+). The protein operates within cofactor biosynthesis; 7,8-dihydroneopterin triphosphate biosynthesis; 7,8-dihydroneopterin triphosphate from GTP: step 1/1. This is GTP cyclohydrolase 1 from Sulfolobus acidocaldarius (strain ATCC 33909 / DSM 639 / JCM 8929 / NBRC 15157 / NCIMB 11770).